A 297-amino-acid polypeptide reads, in one-letter code: Heterogeneous nuclear ribonucleoprotein D-like (297 aa).

The interval 1-21 is disordered; that stretch reads MTGFGATPDFNEGSKINASKN. 2 consecutive RRM domains span residues 26–108 and 111–190; these read GKMF…KGKE and KKVF…QPKE. The tract at residues 192 to 224 is disordered; that stretch reads YRQQQQKQQKGGRGAATGRGGARGRGRGQGWNQ. Residues 202–222 are compositionally biased toward gly residues; the sequence is GGRGAATGRGGARGRGRGQGW.

It localises to the nucleus. It is found in the cytoplasm. Its function is as follows. Acts as a transcriptional regulator. Binds DNA and RNA. In Xenopus tropicalis (Western clawed frog), this protein is Heterogeneous nuclear ribonucleoprotein D-like (hnrnpdl).